A 287-amino-acid chain; its full sequence is Formamidopyrimidine-DNA glycosylase (287 aa).

Proline 2 serves as the catalytic Schiff-base intermediate with DNA. Glutamate 3 functions as the Proton donor in the catalytic mechanism. The Proton donor; for beta-elimination activity role is filled by lysine 60. DNA is bound by residues histidine 100 and arginine 119. Residues 249-283 (QVYGREGEPCRHCGTVIAKIKLGGRSAHFCPQCQP) form an FPG-type zinc finger. The Proton donor; for delta-elimination activity role is filled by arginine 273.

Belongs to the FPG family. As to quaternary structure, monomer. Zn(2+) is required as a cofactor.

The catalysed reaction is Hydrolysis of DNA containing ring-opened 7-methylguanine residues, releasing 2,6-diamino-4-hydroxy-5-(N-methyl)formamidopyrimidine.. It carries out the reaction 2'-deoxyribonucleotide-(2'-deoxyribose 5'-phosphate)-2'-deoxyribonucleotide-DNA = a 3'-end 2'-deoxyribonucleotide-(2,3-dehydro-2,3-deoxyribose 5'-phosphate)-DNA + a 5'-end 5'-phospho-2'-deoxyribonucleoside-DNA + H(+). Its function is as follows. Involved in base excision repair of DNA damaged by oxidation or by mutagenic agents. Acts as a DNA glycosylase that recognizes and removes damaged bases. Has a preference for oxidized purines, such as 7,8-dihydro-8-oxoguanine (8-oxoG). Has AP (apurinic/apyrimidinic) lyase activity and introduces nicks in the DNA strand. Cleaves the DNA backbone by beta-delta elimination to generate a single-strand break at the site of the removed base with both 3'- and 5'-phosphates. The chain is Formamidopyrimidine-DNA glycosylase (mutM) from Synechocystis sp. (strain ATCC 27184 / PCC 6803 / Kazusa).